Reading from the N-terminus, the 76-residue chain is cAMP-dependent protein kinase inhibitor alpha (76 aa).

Residue threonine 2 is modified to N-acetylthreonine. The interval 49–76 (KTEGEEDAQRNSTEQSGEAQGEAAKSES) is disordered.

The protein belongs to the PKI family.

In terms of biological role, extremely potent competitive inhibitor of cAMP-dependent protein kinase activity, this protein interacts with the catalytic subunit of the enzyme after the cAMP-induced dissociation of its regulatory chains. The sequence is that of cAMP-dependent protein kinase inhibitor alpha (PKIA) from Bos taurus (Bovine).